Consider the following 181-residue polypeptide: ATP synthase subunit b, chloroplastic (181 aa).

The helical transmembrane segment at 31 to 50 (NVLNIAILLSGVVYLGRNFL) threads the bilayer.

The protein belongs to the ATPase B chain family. F-type ATPases have 2 components, F(1) - the catalytic core - and F(0) - the membrane proton channel. F(1) has five subunits: alpha(3), beta(3), gamma(1), delta(1), epsilon(1). F(0) has four main subunits: a(1), b(1), b'(1) and c(10-14). The alpha and beta chains form an alternating ring which encloses part of the gamma chain. F(1) is attached to F(0) by a central stalk formed by the gamma and epsilon chains, while a peripheral stalk is formed by the delta, b and b' chains.

It localises to the plastid. The protein localises to the chloroplast thylakoid membrane. F(1)F(0) ATP synthase produces ATP from ADP in the presence of a proton or sodium gradient. F-type ATPases consist of two structural domains, F(1) containing the extramembraneous catalytic core and F(0) containing the membrane proton channel, linked together by a central stalk and a peripheral stalk. During catalysis, ATP synthesis in the catalytic domain of F(1) is coupled via a rotary mechanism of the central stalk subunits to proton translocation. In terms of biological role, component of the F(0) channel, it forms part of the peripheral stalk, linking F(1) to F(0). The chain is ATP synthase subunit b, chloroplastic from Rhodomonas salina (Cryptomonas salina).